The following is a 157-amino-acid chain: Protein-export protein SecB (157 aa).

Belongs to the SecB family. Homotetramer, a dimer of dimers. One homotetramer interacts with 1 SecA dimer.

It localises to the cytoplasm. Functionally, one of the proteins required for the normal export of preproteins out of the cell cytoplasm. It is a molecular chaperone that binds to a subset of precursor proteins, maintaining them in a translocation-competent state. It also specifically binds to its receptor SecA. The polypeptide is Protein-export protein SecB (Tolumonas auensis (strain DSM 9187 / NBRC 110442 / TA 4)).